Reading from the N-terminus, the 173-residue chain is Insertion element IS150 protein InsJ (173 aa).

Belongs to the IS150/IS1296 orfA family.

This chain is Insertion element IS150 protein InsJ (insJ), found in Escherichia coli (strain K12).